The primary structure comprises 162 residues: D-aminoacyl-tRNA deacylase (162 aa).

Positions 145–146 (GP) match the Gly-cisPro motif, important for rejection of L-amino acids motif.

This sequence belongs to the DTD family. In terms of assembly, homodimer.

Its subcellular location is the cytoplasm. The enzyme catalyses glycyl-tRNA(Ala) + H2O = tRNA(Ala) + glycine + H(+). The catalysed reaction is a D-aminoacyl-tRNA + H2O = a tRNA + a D-alpha-amino acid + H(+). In terms of biological role, an aminoacyl-tRNA editing enzyme that deacylates mischarged D-aminoacyl-tRNAs. Also deacylates mischarged glycyl-tRNA(Ala), protecting cells against glycine mischarging by AlaRS. Acts via tRNA-based rather than protein-based catalysis; rejects L-amino acids rather than detecting D-amino acids in the active site. By recycling D-aminoacyl-tRNA to D-amino acids and free tRNA molecules, this enzyme counteracts the toxicity associated with the formation of D-aminoacyl-tRNA entities in vivo and helps enforce protein L-homochirality. This chain is D-aminoacyl-tRNA deacylase, found in Bifidobacterium longum (strain NCC 2705).